A 627-amino-acid polypeptide reads, in one-letter code: Pheromone B alpha 2 receptor (627 aa).

The Extracellular segment spans residues 1-7 (MLDPTYP). A helical membrane pass occupies residues 8–28 (AFPIFAFLGIVCCLVPLPWHL). Over 29-35 (QSWNSGT) the chain is Cytoplasmic. The chain crosses the membrane as a helical span at residues 36 to 56 (CFLMIWTAVACLNMFVNSIIW). Residues 57–69 (KDHAQNVAPVWCE) lie on the Extracellular side of the membrane. A helical transmembrane segment spans residues 70-90 (ISIRITLGASVGIPASSLCIV). The Cytoplasmic portion of the chain corresponds to 91–102 (RRLYSIAKKFRA). A helical transmembrane segment spans residues 103–123 (VMVDALICVLFPILYIILQIV). The Extracellular segment spans residues 124–150 (VQGHRFNILENIGCFPAIINTPLTYPL). A helical transmembrane segment spans residues 151–171 (TFMWPVLIGVISFIYSTLALI). Residues 172 to 197 (QFNRHRLQFTQFLHSNSTLSVSRYLR) are Cytoplasmic-facing. The chain crosses the membrane as a helical span at residues 198 to 218 (LMALAMTEMMCTTPMGVFVII). At 219–260 (LNAKATPVSPYVSWAVTHYGYGRIDQVPAIIWRSNRLLVASY) the chain is on the extracellular side. A helical membrane pass occupies residues 261 to 281 (ELTRWSSPAIALIFFFYFGFA). Over 282-627 (QEARRNYAAA…ASPRTHRASV (346 aa)) the chain is Cytoplasmic. 3 disordered regions span residues 363–405 (LPRP…SSPI), 479–505 (TVPQ…SSSA), and 518–627 (LPST…RASV). A compositionally biased stretch (low complexity) spans 372 to 387 (SSSGFSSSDSTRFGSS). Composition is skewed to polar residues over residues 519–533 (PSTT…SLPT) and 545–555 (SLSQLFGISSM). The segment covering 569 to 607 (ATGTASPTTTAPAPASTTIAPASATMAPATTTTAPTTIA) has biased composition (low complexity).

The protein belongs to the G-protein coupled receptor 4 family.

The protein resides in the cell membrane. Its function is as follows. Receptor for the BAP2 pheromone, a prenylated mating factor. The receptor/pheromone interaction may have a role in the fusion of clamp cells. The protein is Pheromone B alpha 2 receptor (BAR2) of Schizophyllum commune (Split gill fungus).